Here is a 242-residue protein sequence, read N- to C-terminus: Small ribosomal subunit protein uS5 (242 aa).

The span at 1-14 (MADENSTGPGNQPE) shows a compositional bias: polar residues. The disordered stretch occupies residues 1-65 (MADENSTGPG…DRRPRDEDGG (65 aa)). A compositionally biased stretch (basic and acidic residues) spans 41–65 (DGGRGGRDGGRGRRDDRRPRDEDGG). The 64-residue stretch at 68–131 (LIEKLVHINR…AAAKKAMIRV (64 aa)) folds into the S5 DRBM domain. A disordered region spans residues 204–242 (EQTSPKSVAQRRGKKVSDLIKRGGASDRAAEAEAAAVTE). Residues 218-234 (KVSDLIKRGGASDRAAE) show a composition bias toward basic and acidic residues.

It belongs to the universal ribosomal protein uS5 family. Part of the 30S ribosomal subunit. Contacts proteins S4 and S8.

In terms of biological role, with S4 and S12 plays an important role in translational accuracy. Located at the back of the 30S subunit body where it stabilizes the conformation of the head with respect to the body. The polypeptide is Small ribosomal subunit protein uS5 (Sphingopyxis alaskensis (strain DSM 13593 / LMG 18877 / RB2256) (Sphingomonas alaskensis)).